A 337-amino-acid polypeptide reads, in one-letter code: HTH-type transcriptional repressor PurR (337 aa).

The HTH lacI-type domain maps to 2-56; that stretch reads ATIKDVAKLAAVSTTTVSHVINKTRFVAEATQKRVWEAVEELNYAPSAVARSLKC. Positions 4–23 form a DNA-binding region, H-T-H motif; the sequence is IKDVAKLAAVSTTTVSHVIN. Residues 48–56 mediate DNA binding; it reads SAVARSLKC. Residues phenylalanine 73, lysine 189, threonine 191, phenylalanine 220, and aspartate 276 each contribute to the hypoxanthine site.

As to quaternary structure, homodimer.

It functions in the pathway purine metabolism; purine nucleotide biosynthesis [regulation]. Its function is as follows. Is the main repressor of the genes involved in the de novo synthesis of purine nucleotides, regulating purB, purC, purEK, purF, purHD, purL, purMN and guaBA expression. PurR is allosterically activated to bind its cognate DNA by binding the purine corepressors, hypoxanthine or guanine, thereby effecting transcription repression. In Aliivibrio fischeri (strain ATCC 700601 / ES114) (Vibrio fischeri), this protein is HTH-type transcriptional repressor PurR.